The chain runs to 89 residues: Small ribosomal subunit protein bS18 (89 aa).

Belongs to the bacterial ribosomal protein bS18 family. As to quaternary structure, part of the 30S ribosomal subunit. Forms a tight heterodimer with protein bS6.

Its function is as follows. Binds as a heterodimer with protein bS6 to the central domain of the 16S rRNA, where it helps stabilize the platform of the 30S subunit. This chain is Small ribosomal subunit protein bS18, found in Bdellovibrio bacteriovorus (strain ATCC 15356 / DSM 50701 / NCIMB 9529 / HD100).